Reading from the N-terminus, the 376-residue chain is Serine-arginine protein 55 (376 aa).

Residues serine 4–glycine 74 form the RRM 1 domain. A disordered region spans residues arginine 73 to proline 114. A compositionally biased stretch (basic and acidic residues) spans serine 79 to glycine 89. Residues tyrosine 120–arginine 193 enclose the RRM 2 domain. Residue serine 165 is modified to Phosphoserine. Residues arginine 185–glycine 194 show a composition bias toward basic and acidic residues. The disordered stretch occupies residues arginine 185 to aspartate 376. Over residues arginine 196–arginine 205 the composition is skewed to gly residues. 2 stretches are compositionally biased toward basic residues: residues serine 215–asparagine 263 and serine 271–serine 283. Over residues proline 284–serine 304 the composition is skewed to basic and acidic residues.

The protein belongs to the splicing factor SR family. Post-translationally, extensively phosphorylated on serine residues in the RS domain.

Its subcellular location is the nucleus. Functionally, essential for development. May have a critical role in splicing or in controlling alternative splice site use of at least some pre-mRNA in vivo. Not required for all splicing. May play a general role in the condensation or decondensation of chromatin. The protein is Serine-arginine protein 55 (B52) of Drosophila melanogaster (Fruit fly).